The chain runs to 319 residues: Methionyl-tRNA formyltransferase (319 aa).

Residue 112-115 (SLLP) coordinates (6S)-5,6,7,8-tetrahydrofolate.

It belongs to the Fmt family.

The catalysed reaction is L-methionyl-tRNA(fMet) + (6R)-10-formyltetrahydrofolate = N-formyl-L-methionyl-tRNA(fMet) + (6S)-5,6,7,8-tetrahydrofolate + H(+). Attaches a formyl group to the free amino group of methionyl-tRNA(fMet). The formyl group appears to play a dual role in the initiator identity of N-formylmethionyl-tRNA by promoting its recognition by IF2 and preventing the misappropriation of this tRNA by the elongation apparatus. The protein is Methionyl-tRNA formyltransferase of Pelobacter propionicus (strain DSM 2379 / NBRC 103807 / OttBd1).